We begin with the raw amino-acid sequence, 183 residues long: ER membrane protein complex subunit 4 (183 aa).

T2 carries the post-translational modification N-acetylthreonine. Over 2–66 (TAQGGLVANR…VQETDRILVE (65 aa)) the chain is Cytoplasmic. Positions 20–39 (ELSGPGGGSRGRSDRGSGQG) are disordered. The residue at position 36 (S36) is a Phosphoserine. A helical transmembrane segment spans residues 67–87 (KRCWDIALGPLKQIPMNLFIM). Residues 88 to 98 (YMAGNTISIFP) lie on the Lumenal side of the membrane. A helical membrane pass occupies residues 99–120 (TMMVCMMAWRPIQALMAISATF). Residues 121–127 (KMLESSS) lie on the Cytoplasmic side of the membrane. A helical membrane pass occupies residues 128 to 148 (QKFLQGLVYLIGNLMGLALAV). Topologically, residues 149 to 183 (YKCQSMGLLPTHASDWLAFIEPPERMEFSGGGLLL) are lumenal.

Belongs to the EMC4 family. In terms of assembly, component of the ER membrane protein complex (EMC). As to expression, isoform 1 is expressed in brain and heart. Isoform 2 is expressed in heart.

It is found in the endoplasmic reticulum membrane. In terms of biological role, part of the endoplasmic reticulum membrane protein complex (EMC) that enables the energy-independent insertion into endoplasmic reticulum membranes of newly synthesized membrane proteins. Preferentially accommodates proteins with transmembrane domains that are weakly hydrophobic or contain destabilizing features such as charged and aromatic residues. Involved in the cotranslational insertion of multi-pass membrane proteins in which stop-transfer membrane-anchor sequences become ER membrane spanning helices. It is also required for the post-translational insertion of tail-anchored/TA proteins in endoplasmic reticulum membranes. By mediating the proper cotranslational insertion of N-terminal transmembrane domains in an N-exo topology, with translocated N-terminus in the lumen of the ER, controls the topology of multi-pass membrane proteins like the G protein-coupled receptors. By regulating the insertion of various proteins in membranes, it is indirectly involved in many cellular processes. The sequence is that of ER membrane protein complex subunit 4 (EMC4) from Homo sapiens (Human).